Consider the following 485-residue polypeptide: Glutamyl-tRNA(Gln) amidotransferase subunit A (485 aa).

Residues lysine 79 and serine 154 each act as charge relay system in the active site. Catalysis depends on serine 178, which acts as the Acyl-ester intermediate.

This sequence belongs to the amidase family. GatA subfamily. As to quaternary structure, heterotrimer of A, B and C subunits.

The catalysed reaction is L-glutamyl-tRNA(Gln) + L-glutamine + ATP + H2O = L-glutaminyl-tRNA(Gln) + L-glutamate + ADP + phosphate + H(+). In terms of biological role, allows the formation of correctly charged Gln-tRNA(Gln) through the transamidation of misacylated Glu-tRNA(Gln) in organisms which lack glutaminyl-tRNA synthetase. The reaction takes place in the presence of glutamine and ATP through an activated gamma-phospho-Glu-tRNA(Gln). The protein is Glutamyl-tRNA(Gln) amidotransferase subunit A of Staphylococcus saprophyticus subsp. saprophyticus (strain ATCC 15305 / DSM 20229 / NCIMB 8711 / NCTC 7292 / S-41).